We begin with the raw amino-acid sequence, 185 residues long: Elongation factor P (185 aa).

Belongs to the elongation factor P family.

The protein resides in the cytoplasm. It participates in protein biosynthesis; polypeptide chain elongation. Involved in peptide bond synthesis. Stimulates efficient translation and peptide-bond synthesis on native or reconstituted 70S ribosomes in vitro. Probably functions indirectly by altering the affinity of the ribosome for aminoacyl-tRNA, thus increasing their reactivity as acceptors for peptidyl transferase. The polypeptide is Elongation factor P (Clostridioides difficile (strain 630) (Peptoclostridium difficile)).